The primary structure comprises 220 residues: Putative amino-acid transporter YisU (220 aa).

A run of 6 helical transmembrane segments spans residues 15-35 (FFSM…ILPL), 67-87 (TLLI…LPVF), 89-109 (TVMM…TWNI), 128-148 (AFAA…IGVI), 161-181 (WLFM…LAIA), and 195-215 (MLIV…YFGV).

This sequence belongs to the LysE/ArgO transporter (TC 2.A.75) family.

Its subcellular location is the cell membrane. In Bacillus subtilis (strain 168), this protein is Putative amino-acid transporter YisU (yisU).